The following is a 3071-amino-acid chain: Intermembrane lipid transfer protein vps1301 (3071 aa).

Positions 2 to 115 constitute a Chorein N-terminal domain; that stretch reads LEGLVAGLLN…QQALKQEQLD (114 aa). One can recognise an SHR-BD domain in the interval 2143 to 2415; it reads HIEIFSPYII…KYSWDYPCCA (273 aa).

The protein belongs to the VPS13 family.

The protein localises to the golgi apparatus. Its subcellular location is the trans-Golgi network. Functionally, mediates the transfer of lipids between membranes at organelle contact sites. May play a role in mitochondrial lipid homeostasis, Golgi vesicle transport, reticulophagy, actin cytoskeleton organization and formation of the forespore membrane. This chain is Intermembrane lipid transfer protein vps1301, found in Schizosaccharomyces pombe (strain 972 / ATCC 24843) (Fission yeast).